The primary structure comprises 185 residues: Potassium-transporting ATPase KdpC subunit (185 aa).

Residues 14-34 (ALSLLTGVAYPLALTGIAAVI) traverse the membrane as a helical segment.

It belongs to the KdpC family. The system is composed of three essential subunits: KdpA, KdpB and KdpC.

It is found in the cell inner membrane. Its function is as follows. Part of the high-affinity ATP-driven potassium transport (or Kdp) system, which catalyzes the hydrolysis of ATP coupled with the electrogenic transport of potassium into the cytoplasm. This subunit acts as a catalytic chaperone that increases the ATP-binding affinity of the ATP-hydrolyzing subunit KdpB by the formation of a transient KdpB/KdpC/ATP ternary complex. This is Potassium-transporting ATPase KdpC subunit from Cereibacter sphaeroides (strain KD131 / KCTC 12085) (Rhodobacter sphaeroides).